The chain runs to 365 residues: Alanine racemase (365 aa).

Lys-32 acts as the Proton acceptor; specific for D-alanine in catalysis. Lys-32 carries the N6-(pyridoxal phosphate)lysine modification. Arg-128 serves as a coordination point for substrate. Tyr-257 serves as the catalytic Proton acceptor; specific for L-alanine. Met-305 contacts substrate.

Belongs to the alanine racemase family. Requires pyridoxal 5'-phosphate as cofactor.

The catalysed reaction is L-alanine = D-alanine. The protein operates within amino-acid biosynthesis; D-alanine biosynthesis; D-alanine from L-alanine: step 1/1. In terms of biological role, catalyzes the interconversion of L-alanine and D-alanine. May also act on other amino acids. The protein is Alanine racemase (alr) of Francisella philomiragia subsp. philomiragia (strain ATCC 25017 / CCUG 19701 / FSC 153 / O#319-036).